A 181-amino-acid polypeptide reads, in one-letter code: MGRLLLEPQANAPANANPKPKGGINDTYFDTNMVIILAALLCALICALSLNSALRCVLRITRRFTSDDQVSNASNANANLGRLAAATGLKKQALKQIPVGLYGSGIIDMKATECLICLGDFEDGEKVRVLPKCNHGFHVRCIDTWLLSRSSCPTCRQSLLLEQPSPMAVSRRDEDMVVSIV.

A helical membrane pass occupies residues 34-54 (VIILAALLCALICALSLNSAL). An RING-type; atypical zinc finger spans residues 114 to 156 (CLICLGDFEDGEKVRVLPKCNHGFHVRCIDTWLLSRSSCPTCR).

Belongs to the RING-type zinc finger family. ATL subfamily.

Its subcellular location is the membrane. It catalyses the reaction S-ubiquitinyl-[E2 ubiquitin-conjugating enzyme]-L-cysteine + [acceptor protein]-L-lysine = [E2 ubiquitin-conjugating enzyme]-L-cysteine + N(6)-ubiquitinyl-[acceptor protein]-L-lysine.. Its pathway is protein modification; protein ubiquitination. In Arabidopsis thaliana (Mouse-ear cress), this protein is RING-H2 finger protein ATL72 (ATL72).